Consider the following 389-residue polypeptide: Large envelope protein (389 aa).

Met-1 carries the N-acetylmethionine modification. Gly-2 carries the N-myristoyl glycine; by host lipid modification. The tract at residues 2-108 (GTNLSVPNPL…PPLRDSHPQA (107 aa)) is pre-S1. Residues 2–163 (GTNLSVPNPL…FSRTGDPAPN (162 aa)) form a pre-S region. Over 2-170 (GTNLSVPNPL…APNMESTTSG (169 aa)) the chain is Virion surface; in external conformation. Residues 2 to 242 (GTNLSVPNPL…PGYRWMCLRR (241 aa)) are Intravirion; in internal conformation-facing. A disordered region spans residues 74 to 105 (LTTVPAAPPPASTNRQSGRQPTPISPPLRDSH). Residues 85–95 (STNRQSGRQPT) show a composition bias toward polar residues. The interval 109–163 (MQWNSTTFHQALLDPRVRGLYFPAGGSSSGTVNPVPTIVSPISSIFSRTGDPAPN) is pre-S2. Residues 171 to 191 (FLGPLLVLQAGFFLLTRILTI) form a helical membrane-spanning segment. At 192-242 (PQSLDSWWTSLNFLGEAPTCPGQNSQSPTSNHSPTSCPPICPGYRWMCLRR) the chain is on the intravirion; in external conformation side. The helical transmembrane segment at 243 to 263 (FIIFLFILLLCLIFLLVLLDY) threads the bilayer. The Virion surface segment spans residues 264-337 (QGMLPVCPLL…WASVRFSWLS (74 aa)). Asn-309 carries an N-linked (GlcNAc...) asparagine; by host glycan. The chain crosses the membrane as a helical span at residues 338-358 (LLVPFVQWFAGLSPTVWLSVI). Residues 359–364 (WMMWYW) lie on the Intravirion side of the membrane. The chain crosses the membrane as a helical span at residues 365–387 (GPSLYNILSPFLPLLPIFFCLWV). At 388-389 (YI) the chain is on the virion surface side.

The protein belongs to the orthohepadnavirus major surface antigen family. In terms of assembly, in its internal form (Li-HBsAg), interacts with the capsid protein and with the isoform S. Interacts with host chaperone CANX. As to quaternary structure, associates with host chaperone CANX through its pre-S2 N glycan; this association may be essential for isoform M proper secretion. Interacts with isoform L. Interacts with the antigens of satellite virus HDV (HDVAgs); this interaction is required for encapsidation of HDV genomic RNA. Isoform M is N-terminally acetylated by host at a ratio of 90%, and N-glycosylated by host at the pre-S2 region. Post-translationally, myristoylated.

It localises to the virion membrane. Functionally, the large envelope protein exists in two topological conformations, one which is termed 'external' or Le-HBsAg and the other 'internal' or Li-HBsAg. In its external conformation the protein attaches the virus to cell receptors and thereby initiating infection. This interaction determines the species specificity and liver tropism. This attachment induces virion internalization predominantly through caveolin-mediated endocytosis. The large envelope protein also assures fusion between virion membrane and endosomal membrane. In its internal conformation the protein plays a role in virion morphogenesis and mediates the contact with the nucleocapsid like a matrix protein. Its function is as follows. The middle envelope protein plays an important role in the budding of the virion. It is involved in the induction of budding in a nucleocapsid independent way. In this process the majority of envelope proteins bud to form subviral lipoprotein particles of 22 nm of diameter that do not contain a nucleocapsid. The protein is Large envelope protein of Hepatitis B virus genotype C subtype adr (isolate Japan/A4/1994) (HBV-C).